The sequence spans 241 residues: MTRDEAKNKIIFALDVDNLKDIDCWAEKLSRKVGMFKVGKELFTSAGPAAVEAVKKHAGEVFLDLKYHDIPNTVAQAMLAAGRLGVKLANLHALGGPEMMEKASQAVRKEFSENERPRLLAVTILTSSTQDTLKAVGIEHPVEEMVVRLAKLAKESGMDGVVASPLEIEAIRAACGPDFLIVTPGVRPSFAAVDDQKRIMTPAEAVKAGADYLVIGRPIAKAADPIQAAELIVDEIVAGVQ.

Residues D15, K37, 64 to 73 (DLKYHDIPNT), T126, R187, Q196, G216, and R217 each bind substrate. Residue K66 is the Proton donor of the active site.

Belongs to the OMP decarboxylase family. Type 1 subfamily. In terms of assembly, homodimer.

The catalysed reaction is orotidine 5'-phosphate + H(+) = UMP + CO2. It functions in the pathway pyrimidine metabolism; UMP biosynthesis via de novo pathway; UMP from orotate: step 2/2. Its function is as follows. Catalyzes the decarboxylation of orotidine 5'-monophosphate (OMP) to uridine 5'-monophosphate (UMP). The chain is Orotidine 5'-phosphate decarboxylase from Trichlorobacter lovleyi (strain ATCC BAA-1151 / DSM 17278 / SZ) (Geobacter lovleyi).